The sequence spans 689 residues: DNA ligase (689 aa).

Residues 40 to 44 (DQEYD), 89 to 90 (SL), and E122 each bind NAD(+). Residue K124 is the N6-AMP-lysine intermediate of the active site. Residues R145, E182, K300, and K325 each contribute to the NAD(+) site. Positions 419, 422, 437, and 442 each coordinate Zn(2+). A BRCT domain is found at 600 to 689 (QADGVLTGAT…SADASADASA (90 aa)).

Belongs to the NAD-dependent DNA ligase family. LigA subfamily. It depends on Mg(2+) as a cofactor. Mn(2+) is required as a cofactor.

The catalysed reaction is NAD(+) + (deoxyribonucleotide)n-3'-hydroxyl + 5'-phospho-(deoxyribonucleotide)m = (deoxyribonucleotide)n+m + AMP + beta-nicotinamide D-nucleotide.. In terms of biological role, DNA ligase that catalyzes the formation of phosphodiester linkages between 5'-phosphoryl and 3'-hydroxyl groups in double-stranded DNA using NAD as a coenzyme and as the energy source for the reaction. It is essential for DNA replication and repair of damaged DNA. The sequence is that of DNA ligase from Gemmatimonas aurantiaca (strain DSM 14586 / JCM 11422 / NBRC 100505 / T-27).